Consider the following 338-residue polypeptide: Ketol-acid reductoisomerase (NADP(+)) (338 aa).

Residues 1–181 (MQVYYDKDAD…GGGRAGVIET (181 aa)) form the KARI N-terminal Rossmann domain. NADP(+)-binding positions include 24–27 (YGSQ), Arg47, Ser50, Ser52, and 82–85 (DEHQ). The active site involves His107. Residue Gly133 participates in NADP(+) binding. The KARI C-terminal knotted domain maps to 182 to 327 (SFKDETETDL…AKLRDMMPWI (146 aa)). Mg(2+) contacts are provided by Asp190, Glu194, Glu226, and Glu230. Substrate is bound at residue Ser251.

It belongs to the ketol-acid reductoisomerase family. It depends on Mg(2+) as a cofactor.

The catalysed reaction is (2R)-2,3-dihydroxy-3-methylbutanoate + NADP(+) = (2S)-2-acetolactate + NADPH + H(+). It carries out the reaction (2R,3R)-2,3-dihydroxy-3-methylpentanoate + NADP(+) = (S)-2-ethyl-2-hydroxy-3-oxobutanoate + NADPH + H(+). It participates in amino-acid biosynthesis; L-isoleucine biosynthesis; L-isoleucine from 2-oxobutanoate: step 2/4. Its pathway is amino-acid biosynthesis; L-valine biosynthesis; L-valine from pyruvate: step 2/4. In terms of biological role, involved in the biosynthesis of branched-chain amino acids (BCAA). Catalyzes an alkyl-migration followed by a ketol-acid reduction of (S)-2-acetolactate (S2AL) to yield (R)-2,3-dihydroxy-isovalerate. In the isomerase reaction, S2AL is rearranged via a Mg-dependent methyl migration to produce 3-hydroxy-3-methyl-2-ketobutyrate (HMKB). In the reductase reaction, this 2-ketoacid undergoes a metal-dependent reduction by NADPH to yield (R)-2,3-dihydroxy-isovalerate. The sequence is that of Ketol-acid reductoisomerase (NADP(+)) from Thioalkalivibrio sulfidiphilus (strain HL-EbGR7).